We begin with the raw amino-acid sequence, 529 residues long: Probable feruloyl esterase B-1 (529 aa).

The N-terminal stretch at 1 to 19 (MKISYFFVASLSYVSVARA) is a signal peptide. 2 cysteine pairs are disulfide-bonded: cysteine 27–cysteine 75 and cysteine 63–cysteine 114. N-linked (GlcNAc...) asparagine glycosylation is found at asparagine 53, asparagine 64, asparagine 85, asparagine 98, and asparagine 138. 4 disulfide bridges follow: cysteine 187/cysteine 445, cysteine 256/cysteine 273, cysteine 282/cysteine 295, and cysteine 505/cysteine 527. The Acyl-ester intermediate role is filled by serine 188. Residue asparagine 233 is glycosylated (N-linked (GlcNAc...) asparagine). Aspartate 257, aspartate 260, alanine 262, aspartate 264, and leucine 266 together coordinate Ca(2+). N-linked (GlcNAc...) asparagine glycans are attached at residues asparagine 286, asparagine 290, and asparagine 354. Active-site charge relay system residues include aspartate 404 and histidine 444.

This sequence belongs to the tannase family.

The protein resides in the secreted. The catalysed reaction is feruloyl-polysaccharide + H2O = ferulate + polysaccharide.. Involved in degradation of plant cell walls. Hydrolyzes the feruloyl-arabinose ester bond in arabinoxylans as well as the feruloyl-galactose and feruloyl-arabinose ester bonds in pectin. This Aspergillus terreus (strain NIH 2624 / FGSC A1156) protein is Probable feruloyl esterase B-1 (faeB-1).